The sequence spans 324 residues: NADH-ubiquinone oxidoreductase chain 1 (324 aa).

The next 8 helical transmembrane spans lie at 9–29 (LINPLAYIVPVLLAVAFLTLL), 76–96 (LFLVTPMLALTLAMTLWAPMP), 106–126 (LGVLFILALSSLAVYSILGSG), 146–166 (ISYEVSLGLILRSIIIFWGGY), 177–197 (ALWLLLPACPLAAMWYISTLA), 228–248 (LLFLAEYANILLMNTLSAILF), 259–279 (ELTTINLMTKAALLSVVFLWV), and 299–319 (FLPLTLALVLWHTALPIAFAG).

This sequence belongs to the complex I subunit 1 family.

The protein resides in the mitochondrion inner membrane. It carries out the reaction a ubiquinone + NADH + 5 H(+)(in) = a ubiquinol + NAD(+) + 4 H(+)(out). Functionally, core subunit of the mitochondrial membrane respiratory chain NADH dehydrogenase (Complex I) that is believed to belong to the minimal assembly required for catalysis. Complex I functions in the transfer of electrons from NADH to the respiratory chain. The immediate electron acceptor for the enzyme is believed to be ubiquinone. The protein is NADH-ubiquinone oxidoreductase chain 1 (MT-ND1) of Formosania lacustris (Oriental stream loach).